Reading from the N-terminus, the 225-residue chain is Deoxyribose-phosphate aldolase (225 aa).

The Proton donor/acceptor role is filled by Asp96. The active-site Schiff-base intermediate with acetaldehyde is Lys157. The active-site Proton donor/acceptor is the Lys185.

This sequence belongs to the DeoC/FbaB aldolase family. DeoC type 1 subfamily.

It is found in the cytoplasm. It carries out the reaction 2-deoxy-D-ribose 5-phosphate = D-glyceraldehyde 3-phosphate + acetaldehyde. Its pathway is carbohydrate degradation; 2-deoxy-D-ribose 1-phosphate degradation; D-glyceraldehyde 3-phosphate and acetaldehyde from 2-deoxy-alpha-D-ribose 1-phosphate: step 2/2. Its function is as follows. Catalyzes a reversible aldol reaction between acetaldehyde and D-glyceraldehyde 3-phosphate to generate 2-deoxy-D-ribose 5-phosphate. The protein is Deoxyribose-phosphate aldolase of Microcystis aeruginosa (strain NIES-843 / IAM M-2473).